The sequence spans 685 residues: MDRVTRYPILGIPQAHRGTGLVLDGDTSYTYHLVCTGPEASGWGQDEPQTWPTDYKAQQGVLRQGVSYSVRAYPGQPSPRGLHLETGEDEGLKVYRLGARDAHQGRPTWAVHPEDGEDEEMKTYRLDAGDAVPRGLCDLERERWAIIQGQAVRKSGTVATLQAAPDHGDPRTPGPPRSTPLEENVVDREQIDFLAARQQFLSLEQANKEVPHSSPARGTPAGPSPGVSQAPKAFNKPHLVNGHVVPTKPQGKGVFREENKVRAVPAWASVQVADDPGSLAPVESPGTPKETPIEREIRLAQEREADLREQRGLRRAADHQELVEIPSRPLLTKVSLITAPRRERGRPSLYVQRDMVQETQREEDHRREGLHVGRASTPDWVSEDPQPGLRRALSSDSILSPDSILSPAPDARAADPAPEVRKVNRIPPDAYQPYLSPGTPQLEPSAFGAFSKPSGLSTVDTEAATSPKATMSPRHLSESSGKPMSTKQEPWKLPRGSPQANRGVVRWEYFRLRPLQFRAPDEPQQAQVPHVWGWEVAGAPALRLQKSQSSDLLERERESVLRREREVAEERRNALFPEVFSPTPDESCDQNSRSSSQASGITGSYSVSESPFFSPIRLHSSLAWTVEDPVDSAPPGQRKKEQWYAGINPSDGINSEVLEAIRVTRHKNTMAERWESRIYASEEDD.

Ser78 is subject to Phosphoserine; by CDK1. Disordered regions lie at residues 155 to 181 (SGTV…STPL) and 207 to 253 (NKEV…QGKG). Thr172 is modified (phosphothreonine; by CDK1). Thr179 is modified (phosphothreonine). At Ser214 the chain carries Phosphoserine; by CDK1. A Phosphothreonine modification is found at Thr219. Phosphoserine; by CDK1 is present on Ser284. A Phosphothreonine; by CDK1 modification is found at Thr287. The segment at 345 to 499 (GRPSLYVQRD…PWKLPRGSPQ (155 aa)) is disordered. Ser348 carries the phosphoserine modification. The segment covering 355–371 (MVQETQREEDHRREGLH) has biased composition (basic and acidic residues). Thr377 carries the phosphothreonine; by CDK1 modification. Residue Ser382 is modified to Phosphoserine. Low complexity predominate over residues 392 to 417 (ALSSDSILSPDSILSPAPDARAADPA). Residues Ser394, Ser395, and Ser397 each carry the phosphoserine; by PLK1 modification. A phosphoserine mark is found at Ser406 and Ser436. Positions 454-469 (SGLSTVDTEAATSPKA) are enriched in polar residues. Ser477 is subject to Phosphoserine; by PLK1. Polar residues predominate over residues 478-488 (ESSGKPMSTKQ). A phosphoserine mark is found at Ser547 and Ser549. Residues 551–575 (DLLERERESVLRREREVAEERRNAL) are a coiled coil. 2 disordered regions span residues 575 to 607 (LFPE…SYSV) and 629 to 651 (PVDS…NPSD). Phosphoserine; by PLK1 is present on Ser581. The residue at position 583 (Thr583) is a Phosphothreonine. Positions 589-607 (DQNSRSSSQASGITGSYSV) are enriched in polar residues. Ser592 is modified (phosphoserine; by PLK1). Ser681 is modified (phosphoserine).

The protein belongs to the MISP family. As to quaternary structure, associates with F-actin. Interacts with DCTN1; this interaction regulates DCTN1 distribution at the cell cortex. Interacts with PTK2/FAK and MAPRE1. Post-translationally, phosphorylated by CDK1 and PLK1. CDK1 is the priming kinase for PLK1 phosphorylation. Phosphorylation by PLK1 is required for proper spindle orientation at metaphase.

The protein resides in the cell junction. It is found in the focal adhesion. It localises to the cytoplasm. The protein localises to the cytoskeleton. Its subcellular location is the cell cortex. Plays a role in mitotic spindle orientation and mitotic progression. Regulates the distribution of dynactin at the cell cortex in a PLK1-dependent manner, thus stabilizing cortical and astral microtubule attachments required for proper mitotic spindle positioning. May link microtubules to the actin cytospkeleton and focal adhesions. May be required for directed cell migration and centrosome orientation. May also be necessary for proper stacking of the Golgi apparatus. This Pongo abelii (Sumatran orangutan) protein is Mitotic interactor and substrate of PLK1.